A 150-amino-acid chain; its full sequence is Large ribosomal subunit protein uL23 (150 aa).

Positions 1–24 are disordered; sequence MNKENKTQAVNKAKNTAKVAKKGS. Low complexity predominate over residues 7–18; sequence TQAVNKAKNTAK.

It belongs to the universal ribosomal protein uL23 family.

The polypeptide is Large ribosomal subunit protein uL23 (RPL23A) (Tetrahymena thermophila (strain SB210)).